Consider the following 1004-residue polypeptide: MFVRIGFVVAASIAAVTVKRLNVKPSKPSKPSDNGEGGDKEQSVDPDYNLNDKNLQEEEEEEEEEVKLINSVINQTRGSFSDYLDDDILPEFEDLLSGEIEYPLPDDDNNLEKAEKERKYEVEMAYNDGELERLKQLVKELEEREVKLEGELLEYYGLKEQESDIVELQRQLKIKTVEIDMLNITINSLQAERKKLQEELSQNGIVRKELEVARNKIKELQRQIQLDANQTKGQLLLLKQHVSSLQMKEEEAMNKDTEVERKLKAVQDLEVQVMELKRKNRELQHEKRELSIKLDSAEARIATLSNMTESDKVAKVREEVNNLKHNNEDLLKQVEGLQMNRFSEVEELVYLRWVNACLRYELRNYQTPAGKISARDLSKNLSPKSQAKAKRLMLEYAGSERGQGDTDLESNYSQPSSPGSDDFDNASMDSSTSRFSSFSKKPGLIQKLKKWGKSKDDSSVQSSPSRSFYGGSPGRLSSSMNKQRGPLESLMIRNAGESVAITTFGQVDQESPGTPETPNLPRIRTQQQASSPGEGLNSVAASFHVMSKSVDNVLDEKYPAYKDRHKLAVEREKHIKHKADQARAERFGGNVALPPKLAQLKEKRVVVPSVITATGDQSNESNESNEGKASENAATVTKMKLVDIEKRPPRVPRPPPRSAGGGKSTNLPSARPPLPGGGPPPPPPPPGGGPPPPPGGGPPPPPPPPGALGRGAGGGNKVHRAPELVEFYQSLMKRESKKEGAPSLISSGTGNSSAARNNMIGEIENRSTFLLAVKADVETQGDFVQSLATEVRASSFTDIEDLLAFVSWLDEELSFLVDERAVLKHFDWPEGKADALREAAFEYQDLMKLEKQVTSFVDDPNLSCEPALKKMYKLLEKVEQSVYALLRTRDMAISRYKEFGIPVDWLSDTGVVGKIKLSSVQLAKKYMKRVAYELDSVSGSDKDPNREFLLLQGVRFAFRVHQFAGGFDAESMKAFEELRSRAKTESGDNNNNNNNNSNEEESVN.

The tract at residues 1–25 (MFVRIGFVVAASIAAVTVKRLNVKP) is required for chloroplast localization. The disordered stretch occupies residues 22–63 (NVKPSKPSKPSDNGEGGDKEQSVDPDYNLNDKNLQEEEEEEE). Residues 123–341 (EMAYNDGELE…KQVEGLQMNR (219 aa)) adopt a coiled-coil conformation. A leucine-zipper 1 region spans residues 269-290 (LEVQVMELKRKNRELQHEKREL). Disordered stretches follow at residues 398-482 (GSER…SMNK), 504-536 (FGQVDQESPGTPETPNLPRIRTQQQASSPGEGL), 612-718 (TATG…GNKV), and 736-755 (SKKEGAPSLISSGTGNSSAA). Ser399 is subject to Phosphoserine. The span at 409–419 (ESNYSQPSSPG) shows a compositional bias: polar residues. The segment covering 427–439 (SMDSSTSRFSSFS) has biased composition (low complexity). Composition is skewed to polar residues over residues 504–517 (FGQVDQESPGTPET) and 612–624 (TATGDQSNESNES). Over residues 670-706 (ARPPLPGGGPPPPPPPPGGGPPPPPGGGPPPPPPPPG) the composition is skewed to pro residues. Positions 744–755 (LISSGTGNSSAA) are enriched in polar residues. Residues 802–823 (LLAFVSWLDEELSFLVDERAVL) are leucine-zipper 2. A disordered region spans residues 979–1004 (RSRAKTESGDNNNNNNNNSNEEESVN).

As to expression, expressed in cauline leaves, rosette leaves, stems and flowers, but not in roots.

It localises to the plastid. Its subcellular location is the chloroplast outer membrane. Required for the positioning and movement of chloroplasts. Interacts with profilin and actin independent of its polymerization status. Regulates chloroplast localization by anchoring chloroplasts to the plasma membrane and forming a bridge to the actin cytoskeleton. The chain is Protein CHUP1, chloroplastic (CHUP1) from Arabidopsis thaliana (Mouse-ear cress).